The following is a 544-amino-acid chain: Chaperonin GroEL (544 aa).

Residues 29 to 32 (TLGP), 86 to 90 (DGTTT), G413, 476 to 478 (NAL), and D492 each bind ATP.

It belongs to the chaperonin (HSP60) family. As to quaternary structure, forms a cylinder of 14 subunits composed of two heptameric rings stacked back-to-back. Interacts with the co-chaperonin GroES.

It localises to the cytoplasm. The catalysed reaction is ATP + H2O + a folded polypeptide = ADP + phosphate + an unfolded polypeptide.. In terms of biological role, together with its co-chaperonin GroES, plays an essential role in assisting protein folding. The GroEL-GroES system forms a nano-cage that allows encapsulation of the non-native substrate proteins and provides a physical environment optimized to promote and accelerate protein folding. This is Chaperonin GroEL from Desulfitobacterium hafniense (strain Y51).